Reading from the N-terminus, the 422-residue chain is Synaptotagmin-1 (422 aa).

The Vesicular portion of the chain corresponds to 1 to 57 (MVSESHHEALAAPPVTTVATVLPHNATEPASPGEGKEDAFSKLKEKFMNELHKIPLP). N25 carries N-linked (GlcNAc...) asparagine glycosylation. Residues 58-80 (PWALIAIAIVAVLLVLTCCFCIC) form a helical membrane-spanning segment. Residues C75, C76, C78, C80, and C83 are each lipidated (S-palmitoyl cysteine). Over 81–422 (KKCLFKKKNK…EVDAMLAVKK (342 aa)) the chain is Cytoplasmic. Residues 113 to 142 (TMKDQALKDDDAETGLTDGEEKEEPKEEEK) form a disordered region. The span at 122-134 (DDAETGLTDGEEK) shows a compositional bias: acidic residues. A Phosphothreonine modification is found at T129. The segment at 136–382 (EPKEEEKLGK…AIGKVFVGYN (247 aa)) is phospholipid binding. In terms of domain architecture, C2 1 spans 142–261 (KLGKLQYSLD…DFGHVTEEWR (120 aa)). The Ca(2+) site is built by L172, D173, and D179. Residue Y230 is modified to Phosphotyrosine. Ca(2+) is bound by residues D231, F232, D233, S236, K237, and D239. S265 is subject to Phosphoserine. Residues 273–406 (KLGDICFSLR…NPRRPIAQWH (134 aa)) enclose the C2 2 domain. Residues D304 and D310 each coordinate Ca(2+). Phosphoserine is present on residues S343 and S345. Positions 364, 366, and 372 each coordinate Ca(2+).

This sequence belongs to the synaptotagmin family. Homotetramer. Heterodimer; heterodimerizes with SYT2 in presence of calcium. Interacts with SCAMP5. Interacts with STON2. Forms a complex with SV2B, syntaxin 1 and SNAP25. Interacts with SV2A, SV2B and SV2C. Interacts with RIMS1. Interacts with PRRT2. Interacts with DNAJC5 in a phosphorylation-dependent manner. Interacts (via N-terminus) with RAB3A. Interacts with SYT12. Interacts with calmodulin. Interacts with DNM1 (via C-terminal proline-rich domain (PRD)); this interaction facilitates vesicle fission during clathrin-mediated endocytosis (CME). Ca(2+) serves as cofactor. Post-translationally, glycosylated.

Its subcellular location is the cytoplasmic vesicle. It is found in the secretory vesicle membrane. The protein localises to the secretory vesicle. The protein resides in the synaptic vesicle membrane. It localises to the chromaffin granule membrane. Its subcellular location is the cytoplasm. In terms of biological role, calcium sensor that participates in triggering neurotransmitter release at the synapse. May have a regulatory role in the membrane interactions during trafficking of synaptic vesicles at the active zone of the synapse. It binds acidic phospholipids with a specificity that requires the presence of both an acidic head group and a diacyl backbone. A Ca(2+)-dependent interaction between synaptotagmin and putative receptors for activated protein kinase C has also been reported. It can bind to at least three additional proteins in a Ca(2+)-independent manner; these are neurexins, syntaxin and AP2. Plays a role in dendrite formation by melanocytes. The sequence is that of Synaptotagmin-1 from Bos taurus (Bovine).